A 317-amino-acid chain; its full sequence is MPVQGSQRRLLGSLNSTPTATPHLGLAANQTGARCLEVSVPDGLFLSLGLVSLVENVLVVTAIAKNRNLHSPMYCFICCLALSDLLVSGSNMLETAVTLLLEAGVLAARAAVVQQLDNVIDVITCSSMLSSLCFLGAIAVDRYISIFYALRYHSIVTLPRARRAVAAIWVASVLFSTLFIAYYDHAAVLLCLVIFFLAMLVLMAVLYVHMLARACQHAQGIARLHKRQRLAHQGFGLKGAATLTILLGIFFLCWGPFFLHLTLIVLCPQHPTCSCIFKNFNLFLALIICNAIIDPLIYAFRSQELRRTLKEVLLCSW.

Topologically, residues 1–37 (MPVQGSQRRLLGSLNSTPTATPHLGLAANQTGARCLE) are extracellular. Asn-29 carries an N-linked (GlcNAc...) asparagine glycan. The helical transmembrane segment at 38–63 (VSVPDGLFLSLGLVSLVENVLVVTAI) threads the bilayer. Over 64–72 (AKNRNLHSP) the chain is Cytoplasmic. A helical membrane pass occupies residues 73–93 (MYCFICCLALSDLLVSGSNML). The Extracellular segment spans residues 94 to 118 (ETAVTLLLEAGVLAARAAVVQQLDN). A helical transmembrane segment spans residues 119 to 140 (VIDVITCSSMLSSLCFLGAIAV). The Cytoplasmic segment spans residues 141–163 (DRYISIFYALRYHSIVTLPRARR). The chain crosses the membrane as a helical span at residues 164-183 (AVAAIWVASVLFSTLFIAYY). Over 184-191 (DHAAVLLC) the chain is Extracellular. Residues 192–211 (LVIFFLAMLVLMAVLYVHML) form a helical membrane-spanning segment. The Cytoplasmic portion of the chain corresponds to 212–240 (ARACQHAQGIARLHKRQRLAHQGFGLKGA). A helical membrane pass occupies residues 241 to 266 (ATLTILLGIFFLCWGPFFLHLTLIVL). Residues 267 to 279 (CPQHPTCSCIFKN) are Extracellular-facing. The helical transmembrane segment at 280 to 300 (FNLFLALIICNAIIDPLIYAF) threads the bilayer. At 301–317 (RSQELRRTLKEVLLCSW) the chain is on the cytoplasmic side. Cys-315 carries S-palmitoyl cysteine lipidation.

The protein belongs to the G-protein coupled receptor 1 family. In terms of assembly, interacts with MGRN1, but does not undergo MGRN1-mediated ubiquitination; this interaction competes with GNAS-binding and thus inhibits agonist-induced cAMP production. Interacts with OPN3; the interaction results in a decrease in MC1R-mediated cAMP signaling and ultimately a decrease in melanin production in melanocytes.

The protein resides in the cell membrane. Its function is as follows. Receptor for MSH (alpha, beta and gamma) and ACTH. The activity of this receptor is mediated by G proteins which activate adenylate cyclase. Mediates melanogenesis, the production of eumelanin (black/brown) and phaeomelanin (red/yellow), via regulation of cAMP signaling in melanocytes. The sequence is that of Melanocyte-stimulating hormone receptor (MC1R) from Papio anubis (Olive baboon).